A 67-amino-acid chain; its full sequence is MPQLDTSTWFITILATILTLFIIMQLKISTYYYHSNPEPKTTKMTKSLIPWEIKWTKIYSPLSLPLR.

Residues 8 to 24 (TWFITILATILTLFIIM) traverse the membrane as a helical segment. Residue lysine 54 is modified to N6-acetyllysine; alternate. Residue lysine 54 is modified to N6-succinyllysine; alternate. The residue at position 57 (lysine 57) is an N6-acetyllysine.

It belongs to the ATPase protein 8 family. As to quaternary structure, F-type ATPases have 2 components, CF(1) - the catalytic core - and CF(0) - the membrane proton channel. Component of an ATP synthase complex composed of ATP5PB, ATP5MC1, ATP5F1E, ATP5PD, ATP5ME, ATP5PF, ATP5MF, MT-ATP6, MT-ATP8, ATP5F1A, ATP5F1B, ATP5F1D, ATP5F1C, ATP5PO, ATP5MG, ATP5MK and ATP5MJ. Interacts with PRICKLE3.

It is found in the mitochondrion membrane. In terms of biological role, mitochondrial membrane ATP synthase (F(1)F(0) ATP synthase or Complex V) produces ATP from ADP in the presence of a proton gradient across the membrane which is generated by electron transport complexes of the respiratory chain. F-type ATPases consist of two structural domains, F(1) - containing the extramembraneous catalytic core and F(0) - containing the membrane proton channel, linked together by a central stalk and a peripheral stalk. During catalysis, ATP synthesis in the catalytic domain of F(1) is coupled via a rotary mechanism of the central stalk subunits to proton translocation. Part of the complex F(0) domain. Minor subunit located with subunit a in the membrane. In Artibeus jamaicensis (Jamaican fruit-eating bat), this protein is ATP synthase protein 8 (MT-ATP8).